The chain runs to 126 residues: Aspartate 1-decarboxylase (126 aa).

Ser25 serves as the catalytic Schiff-base intermediate with substrate; via pyruvic acid. Ser25 is subject to Pyruvic acid (Ser). Residue Thr57 participates in substrate binding. Tyr58 functions as the Proton donor in the catalytic mechanism. Gly73–Ala75 is a binding site for substrate.

Belongs to the PanD family. As to quaternary structure, heterooctamer of four alpha and four beta subunits. Pyruvate serves as cofactor. In terms of processing, is synthesized initially as an inactive proenzyme, which is activated by self-cleavage at a specific serine bond to produce a beta-subunit with a hydroxyl group at its C-terminus and an alpha-subunit with a pyruvoyl group at its N-terminus.

It localises to the cytoplasm. The enzyme catalyses L-aspartate + H(+) = beta-alanine + CO2. It functions in the pathway cofactor biosynthesis; (R)-pantothenate biosynthesis; beta-alanine from L-aspartate: step 1/1. Catalyzes the pyruvoyl-dependent decarboxylation of aspartate to produce beta-alanine. This is Aspartate 1-decarboxylase from Psychrobacter sp. (strain PRwf-1).